The following is a 448-amino-acid chain: Deoxyguanosinetriphosphate triphosphohydrolase-like protein (448 aa).

One can recognise an HD domain in the interval 67–260 (RLTHSLEVSQ…MELADDIAYG (194 aa)).

The protein belongs to the dGTPase family. Type 2 subfamily.

This chain is Deoxyguanosinetriphosphate triphosphohydrolase-like protein, found in Aliivibrio salmonicida (strain LFI1238) (Vibrio salmonicida (strain LFI1238)).